Reading from the N-terminus, the 396-residue chain is Succinyl-diaminopimelate desuccinylase (396 aa).

Histidine 74 is a binding site for Zn(2+). Aspartate 76 is a catalytic residue. Aspartate 107 provides a ligand contact to Zn(2+). Catalysis depends on glutamate 142, which acts as the Proton acceptor. The Zn(2+) site is built by glutamate 143, glutamate 171, and histidine 360.

The protein belongs to the peptidase M20A family. DapE subfamily. As to quaternary structure, homodimer. Requires Zn(2+) as cofactor. Co(2+) is required as a cofactor.

It catalyses the reaction N-succinyl-(2S,6S)-2,6-diaminopimelate + H2O = (2S,6S)-2,6-diaminopimelate + succinate. It participates in amino-acid biosynthesis; L-lysine biosynthesis via DAP pathway; LL-2,6-diaminopimelate from (S)-tetrahydrodipicolinate (succinylase route): step 3/3. Functionally, catalyzes the hydrolysis of N-succinyl-L,L-diaminopimelic acid (SDAP), forming succinate and LL-2,6-diaminopimelate (DAP), an intermediate involved in the bacterial biosynthesis of lysine and meso-diaminopimelic acid, an essential component of bacterial cell walls. The sequence is that of Succinyl-diaminopimelate desuccinylase from Methylobacterium sp. (strain 4-46).